Reading from the N-terminus, the 123-residue chain is UPF0102 protein Pput_4400 (123 aa).

The protein belongs to the UPF0102 family.

This Pseudomonas putida (strain ATCC 700007 / DSM 6899 / JCM 31910 / BCRC 17059 / LMG 24140 / F1) protein is UPF0102 protein Pput_4400.